The following is a 343-amino-acid chain: UPF0157 protein YqkA (343 aa).

The region spanning 8-144 is the N-acetyltransferase domain; the sequence is KEATIAREIL…VKAAQGLLLS (137 aa). Residues 135-343 are UPF0157; that stretch reads VKAAQGLLLS…ENDENGGFTL (209 aa).

In the C-terminal section; belongs to the UPF0157 (GrpB) family.

This chain is UPF0157 protein YqkA (yqkA), found in Bacillus subtilis (strain 168).